Consider the following 347-residue polypeptide: MASLGKVVLTLADIAAQLGGDVLGDSQTPISRVAPLATAGEGDITFLANPKFRSQLSACKASAVILRPDVAEEFPGPRIVTGNPYAYYARVATLLNPYQSGLSGVHASAVVESPVPDSVAIAPNVYIGKDVTLGENVVINAGCVIGDGVSIGAGTVLYANVTVYYGCSIGQQCIIHSGAVIGSDGFGFAPEGQSWIKIPQIGRVVIGNDVEIGANTTIDRGALEDTVIGDGCKLDNLVHIGHNCKIGNNSVLAGCTGVAGSTVFGEHCVVGGAGMISGHLNIAAGTTISGGTTVMKSILNPGVYTSVFPLDTHEEWLRNASHIRRLSKLAERVSELEKKLKEKDIEG.

Catalysis depends on His-242, which acts as the Proton acceptor.

The protein belongs to the transferase hexapeptide repeat family. LpxD subfamily. Homotrimer.

It catalyses the reaction a UDP-3-O-[(3R)-3-hydroxyacyl]-alpha-D-glucosamine + a (3R)-hydroxyacyl-[ACP] = a UDP-2-N,3-O-bis[(3R)-3-hydroxyacyl]-alpha-D-glucosamine + holo-[ACP] + H(+). It functions in the pathway bacterial outer membrane biogenesis; LPS lipid A biosynthesis. In terms of biological role, catalyzes the N-acylation of UDP-3-O-acylglucosamine using 3-hydroxyacyl-ACP as the acyl donor. Is involved in the biosynthesis of lipid A, a phosphorylated glycolipid that anchors the lipopolysaccharide to the outer membrane of the cell. This is UDP-3-O-acylglucosamine N-acyltransferase from Dechloromonas aromatica (strain RCB).